We begin with the raw amino-acid sequence, 355 residues long: UDP-N-acetylglucosamine--N-acetylmuramyl-(pentapeptide) pyrophosphoryl-undecaprenol N-acetylglucosamine transferase (355 aa).

UDP-N-acetyl-alpha-D-glucosamine-binding positions include 15–17, asparagine 127, arginine 163, serine 191, isoleucine 244, 263–268, and glutamine 288; these read TGG and ALTVSE.

Belongs to the glycosyltransferase 28 family. MurG subfamily.

Its subcellular location is the cell inner membrane. The catalysed reaction is di-trans,octa-cis-undecaprenyl diphospho-N-acetyl-alpha-D-muramoyl-L-alanyl-D-glutamyl-meso-2,6-diaminopimeloyl-D-alanyl-D-alanine + UDP-N-acetyl-alpha-D-glucosamine = di-trans,octa-cis-undecaprenyl diphospho-[N-acetyl-alpha-D-glucosaminyl-(1-&gt;4)]-N-acetyl-alpha-D-muramoyl-L-alanyl-D-glutamyl-meso-2,6-diaminopimeloyl-D-alanyl-D-alanine + UDP + H(+). It functions in the pathway cell wall biogenesis; peptidoglycan biosynthesis. In terms of biological role, cell wall formation. Catalyzes the transfer of a GlcNAc subunit on undecaprenyl-pyrophosphoryl-MurNAc-pentapeptide (lipid intermediate I) to form undecaprenyl-pyrophosphoryl-MurNAc-(pentapeptide)GlcNAc (lipid intermediate II). In Shigella boydii serotype 18 (strain CDC 3083-94 / BS512), this protein is UDP-N-acetylglucosamine--N-acetylmuramyl-(pentapeptide) pyrophosphoryl-undecaprenol N-acetylglucosamine transferase.